Reading from the N-terminus, the 262-residue chain is 7alpha-hydroxysteroid dehydrogenase (262 aa).

NADP(+) contacts are provided by residues 13-18 (SSTRGI), R38, 63-64 (NA), and N90. The taurochenodeoxycholate site is built by T145 and Y158. Residues Y158, K162, and 191–195 (IGTRA) each bind NADP(+). Y158 acts as the Proton acceptor in catalysis.

The protein belongs to the short-chain dehydrogenases/reductases (SDR) family. As to quaternary structure, homotetramer. A dynamic equilibrium between dimers and tetramers seems to exist.

It carries out the reaction cholate + NADP(+) = 3alpha,12alpha-dihydroxy-7-oxo-5beta-cholanate + NADPH + H(+). The catalysed reaction is chenodeoxycholate + NADP(+) = 7-oxolithocholate + NADPH + H(+). It catalyses the reaction 3alpha,7alpha-dihydroxy-12-oxo-5beta-cholanate + NADP(+) = 7,12-dioxo-lithocholate + NADPH + H(+). The enzyme catalyses 7alpha-hydroxy-3,12-dioxo-5beta-cholanate + NADP(+) = dehydrocholate + NADPH + H(+). It carries out the reaction glycochenodeoxycholate + NADP(+) = 7-oxoglycolithocholate + NADPH + H(+). The catalysed reaction is taurochenodeoxycholate + NADP(+) = 7-oxotaurolithocholate + NADPH + H(+). Its activity is regulated as follows. Activated by metal ions such as Mg(2+), Na(+) and K(+). 7alpha-hydroxysteroid dehydrogenase that catalyzes the NADP(+)-dependent oxidation of the 7alpha-hydroxy group of 7alpha-hydroxysteroids, such as cholate, chenodeoxycholate, glycochenodeoxycholate and taurochenodeoxycholate, to the corresponding 7-oxosteroids. Is also able to catalyze the reverse reduction reactions. Together with 7beta-HSDH encoded in the adjacent gene, is likely involved in the epimerization of the hydroxy group at C-7 of primary bile acids through 7-keto bile acid intermediates. This is 7alpha-hydroxysteroid dehydrogenase from Clostridium sardiniense (Clostridium absonum).